The following is a 117-amino-acid chain: Large ribosomal subunit protein bL20c (117 aa).

This sequence belongs to the bacterial ribosomal protein bL20 family.

It is found in the plastid. It localises to the chloroplast. Binds directly to 23S ribosomal RNA and is necessary for the in vitro assembly process of the 50S ribosomal subunit. It is not involved in the protein synthesizing functions of that subunit. The sequence is that of Large ribosomal subunit protein bL20c from Manihot esculenta (Cassava).